Reading from the N-terminus, the 194-residue chain is PRELI domain containing protein 3B (194 aa).

Residues 1–172 (MKIWTSEHVF…VIHKLNAEIE (172 aa)) enclose the PRELI/MSF1 domain. Phosphoserine is present on residues serine 46 and serine 51.

This sequence belongs to the slowmo family.

This Macaca fascicularis (Crab-eating macaque) protein is PRELI domain containing protein 3B (PRELID3B).